A 66-amino-acid chain; its full sequence is UPF0337 protein SpyM3_0896 (66 aa).

This sequence belongs to the UPF0337 (CsbD) family.

The sequence is that of UPF0337 protein SpyM3_0896 from Streptococcus pyogenes serotype M3 (strain ATCC BAA-595 / MGAS315).